The chain runs to 750 residues: Photosystem I P700 chlorophyll a apoprotein A1 (750 aa).

The next 8 membrane-spanning stretches (helical) occupy residues 70–93, 156–179, 195–219, 291–309, 346–369, 385–411, 433–455, and 531–549; these read VFSAHFGQLAIIFIWLSGMYFHGA, LYSTAIGGLIFAALMLFAGWFHYH, LNHHLAGLLGLGSLSWAGHQVHVSL, TVHHHLAIAVLFLIAGHMY, WHAQLALNLAMLGSLTIVVAHHMY, LSLFTHHMWIGGFLVVGAAAHAAIFMV, AIVSHLNWACIFLGFHSFGLYIH, and FLVHHIHAFTIHVTVLILL. Residues cysteine 573 and cysteine 582 each coordinate [4Fe-4S] cluster. 2 helical membrane-spanning segments follow: residues 589–610 and 664–686; these read HVFLGLFWMYNAISVVIFHFSW and LSAYGLPFLGAHFVWAFSLMFLF. Histidine 675 serves as a coordination point for chlorophyll a'. Chlorophyll a-binding residues include methionine 683 and tyrosine 691. Residue tryptophan 692 participates in phylloquinone binding. The helical transmembrane segment at 724-744 threads the bilayer; that stretch reads AVGVAHYLLGGIATTWAFFLA.

It belongs to the PsaA/PsaB family. The PsaA/B heterodimer binds the P700 chlorophyll special pair and subsequent electron acceptors. PSI consists of a core antenna complex that captures photons, and an electron transfer chain that converts photonic excitation into a charge separation. The eukaryotic PSI reaction center is composed of at least 11 subunits. P700 is a chlorophyll a/chlorophyll a' dimer, A0 is one or more chlorophyll a, A1 is one or both phylloquinones and FX is a shared 4Fe-4S iron-sulfur center. is required as a cofactor.

It is found in the plastid. It localises to the chloroplast thylakoid membrane. It carries out the reaction reduced [plastocyanin] + hnu + oxidized [2Fe-2S]-[ferredoxin] = oxidized [plastocyanin] + reduced [2Fe-2S]-[ferredoxin]. Its function is as follows. PsaA and PsaB bind P700, the primary electron donor of photosystem I (PSI), as well as the electron acceptors A0, A1 and FX. PSI is a plastocyanin-ferredoxin oxidoreductase, converting photonic excitation into a charge separation, which transfers an electron from the donor P700 chlorophyll pair to the spectroscopically characterized acceptors A0, A1, FX, FA and FB in turn. Oxidized P700 is reduced on the lumenal side of the thylakoid membrane by plastocyanin. The protein is Photosystem I P700 chlorophyll a apoprotein A1 of Huperzia lucidula (Shining clubmoss).